The following is a 118-amino-acid chain: Phospholipase A2 'basic' (118 aa).

Intrachain disulfides connect Cys-11–Cys-70, Cys-26–Cys-117, Cys-28–Cys-44, Cys-43–Cys-98, Cys-50–Cys-91, Cys-59–Cys-84, and Cys-77–Cys-89. Positions 27, 29, and 31 each coordinate Ca(2+). His-47 is a catalytic residue. Asp-48 lines the Ca(2+) pocket. Positions 52 to 69 (EKAGKMGCWPYLTLYKYK) match the Coagulation factor Xa binding motif motif. Residue Asp-92 is part of the active site.

This sequence belongs to the phospholipase A2 family. Group I subfamily. D49 sub-subfamily. Ca(2+) is required as a cofactor. As to expression, expressed by the venom gland.

It localises to the secreted. The catalysed reaction is a 1,2-diacyl-sn-glycero-3-phosphocholine + H2O = a 1-acyl-sn-glycero-3-phosphocholine + a fatty acid + H(+). In terms of biological role, snake venom phospholipase A2 (PLA2) that shows strong anticoagulant activity. Binds directly with the coagulation factor FXa (F10) and blocks the formation of the prothombinase complex. Acts by a nonenzymatic mechanism. Also inhibits the complex composed of tissue factor (F3) and coagulation factor VIIa (F7) (TF-VIIa complex) by both enzymatic and nonenzymatic mechanisms. PLA2 catalyzes the calcium-dependent hydrolysis of the 2-acyl groups in 3-sn-phosphoglycerides. The polypeptide is Phospholipase A2 'basic' (Naja nigricollis (Black-necked spitting cobra)).